Here is a 139-residue protein sequence, read N- to C-terminus: Acidic phospholipase A2 5 (139 aa).

Residues methionine 1–glycine 16 form the signal peptide. Intrachain disulfides connect cysteine 42–cysteine 131, cysteine 44–cysteine 60, cysteine 59–cysteine 111, cysteine 65–cysteine 139, cysteine 66–cysteine 104, cysteine 73–cysteine 97, and cysteine 91–cysteine 102. The Ca(2+) site is built by tyrosine 43, glycine 45, and glycine 47. Histidine 63 is a catalytic residue. Aspartate 64 serves as a coordination point for Ca(2+). Aspartate 105 is an active-site residue.

It belongs to the phospholipase A2 family. Group II subfamily. D49 sub-subfamily. It depends on Ca(2+) as a cofactor. As to expression, expressed by the venom gland.

It is found in the secreted. It catalyses the reaction a 1,2-diacyl-sn-glycero-3-phosphocholine + H2O = a 1-acyl-sn-glycero-3-phosphocholine + a fatty acid + H(+). Its function is as follows. PLA2 catalyzes the calcium-dependent hydrolysis of the 2-acyl groups in 3-sn-phosphoglycerides. This is Acidic phospholipase A2 5 from Echis pyramidum leakeyi (Leakey's carpet viper).